Reading from the N-terminus, the 252-residue chain is Chitooligosaccharide deacetylase (252 aa).

Mg(2+)-binding residues include His61 and His125.

This sequence belongs to the YdjC deacetylase family. ChbG subfamily. In terms of assembly, homodimer. It depends on Mg(2+) as a cofactor.

It localises to the cytoplasm. It catalyses the reaction N,N'-diacetylchitobiose + H2O = N-acetyl-beta-D-glucosaminyl-(1-&gt;4)-D-glucosamine + acetate. It carries out the reaction diacetylchitobiose-6'-phosphate + H2O = N'-monoacetylchitobiose-6'-phosphate + acetate. It participates in glycan degradation; chitin degradation. Its function is as follows. Involved in the degradation of chitin. ChbG is essential for growth on the acetylated chitooligosaccharides chitobiose and chitotriose but is dispensable for growth on cellobiose and chitosan dimer, the deacetylated form of chitobiose. Deacetylation of chitobiose-6-P and chitotriose-6-P is necessary for both the activation of the chb promoter by the regulatory protein ChbR and the hydrolysis of phosphorylated beta-glucosides by the phospho-beta-glucosidase ChbF. Catalyzes the removal of only one acetyl group from chitobiose-6-P to yield monoacetylchitobiose-6-P, the inducer of ChbR and the substrate of ChbF. This Escherichia coli O8 (strain IAI1) protein is Chitooligosaccharide deacetylase.